The primary structure comprises 359 residues: Fructose-bisphosphate aldolase (359 aa).

S50 provides a ligand contact to D-glyceraldehyde 3-phosphate. D83 serves as the catalytic Proton donor. H84, D105, E142, and H198 together coordinate Zn(2+). G199 lines the dihydroxyacetone phosphate pocket. H232 is a Zn(2+) binding site. Dihydroxyacetone phosphate is bound by residues 233–235 (GSS) and 275–278 (NIDT).

Belongs to the class II fructose-bisphosphate aldolase family. As to quaternary structure, homodimer. Requires Zn(2+) as cofactor.

The catalysed reaction is beta-D-fructose 1,6-bisphosphate = D-glyceraldehyde 3-phosphate + dihydroxyacetone phosphate. The protein operates within carbohydrate biosynthesis; Calvin cycle. It functions in the pathway carbohydrate degradation; glycolysis; D-glyceraldehyde 3-phosphate and glycerone phosphate from D-glucose: step 4/4. Catalyzes the aldol condensation of dihydroxyacetone phosphate (DHAP or glycerone-phosphate) with glyceraldehyde 3-phosphate (G3P) to form fructose 1,6-bisphosphate (FBP) in gluconeogenesis and the reverse reaction in glycolysis. The protein is Fructose-bisphosphate aldolase (cbbA) of Sinorhizobium medicae (strain WSM419) (Ensifer medicae).